A 330-amino-acid chain; its full sequence is MKVYYEQDATLEVLKDKTVAIIGYGSQGHAHAQNLRDSGINVVVGQRPGGANYELAKEHGFAPLPVAEAAAKADLIMILLPDQVQAAIYEAEIKPNLKPGDALLFAHGFNIHFGQIEPPKDVDVFMIAPKGPGHLVRRTYTEGGGVPCLVAIHQDATGKAMEKALAYAKGVGGARSGVIETTFKEETETDLFGEQAVLCGGLSSLIKAGFETLVEAGYQPEIAYFECLHEVKLIVDLIYEGGLAKMRHSISDTAEYGDYVTGRRIVNEETKKEMKKVLQEIQEGTFARNFILEAKAGYPGFKATRRIEADHQIEQVGGKLRGMMPWLHKK.

The region spanning 1–181 is the KARI N-terminal Rossmann domain; the sequence is MKVYYEQDAT…GGARSGVIET (181 aa). NADP(+)-binding positions include 24 to 27, Arg-47, and 82 to 85; these read YGSQ and DQVQ. Residue His-107 is part of the active site. An NADP(+)-binding site is contributed by Gly-133. One can recognise a KARI C-terminal knotted domain in the interval 182 to 327; sequence TFKEETETDL…GKLRGMMPWL (146 aa). The Mg(2+) site is built by Asp-190, Glu-194, Glu-226, and Glu-230. A substrate-binding site is contributed by Ser-251.

This sequence belongs to the ketol-acid reductoisomerase family. It depends on Mg(2+) as a cofactor.

The catalysed reaction is (2R)-2,3-dihydroxy-3-methylbutanoate + NADP(+) = (2S)-2-acetolactate + NADPH + H(+). The enzyme catalyses (2R,3R)-2,3-dihydroxy-3-methylpentanoate + NADP(+) = (S)-2-ethyl-2-hydroxy-3-oxobutanoate + NADPH + H(+). It participates in amino-acid biosynthesis; L-isoleucine biosynthesis; L-isoleucine from 2-oxobutanoate: step 2/4. It functions in the pathway amino-acid biosynthesis; L-valine biosynthesis; L-valine from pyruvate: step 2/4. Its function is as follows. Involved in the biosynthesis of branched-chain amino acids (BCAA). Catalyzes an alkyl-migration followed by a ketol-acid reduction of (S)-2-acetolactate (S2AL) to yield (R)-2,3-dihydroxy-isovalerate. In the isomerase reaction, S2AL is rearranged via a Mg-dependent methyl migration to produce 3-hydroxy-3-methyl-2-ketobutyrate (HMKB). In the reductase reaction, this 2-ketoacid undergoes a metal-dependent reduction by NADPH to yield (R)-2,3-dihydroxy-isovalerate. The chain is Ketol-acid reductoisomerase (NADP(+)) from Nitratidesulfovibrio vulgaris (strain DSM 19637 / Miyazaki F) (Desulfovibrio vulgaris).